The sequence spans 410 residues: Hemocyanin, beta-C chain unit D (410 aa).

Cu cation-binding residues include His-44 and His-55. An intrachain disulfide couples Cys-50 to Cys-59. The 2'-(S-cysteinyl)-histidine (Cys-His) cross-link spans Cys-60–His-62. The Cu cation site is built by His-71, His-175, His-179, and His-206. Cysteines 165 and 232 form a disulfide. A glycan (N-linked (GlcNAc...) asparagine) is linked at Asn-253. A disulfide bond links Cys-321 and Cys-332.

The protein belongs to the tyrosinase family. Hemocyanin subfamily. In terms of assembly, decamers of large identical subunits (450 kDa), each containing 8 globular oxygen-binding functional units. Cu(2+) is required as a cofactor.

In terms of biological role, hemocyanins are copper-containing oxygen carriers occurring freely dissolved in the hemolymph of many mollusks and arthropods. The chain is Hemocyanin, beta-C chain unit D from Helix pomatia (Roman snail).